Reading from the N-terminus, the 172-residue chain is ATP synthase subunit b (172 aa).

A helical membrane pass occupies residues 12-32 (SLYIGDLVFYIVTFIILMLLV). 2 stretches are compositionally biased toward basic and acidic residues: residues 63-74 (ESAEKMAAKRQA) and 116-131 (AQKDAEQARRDALNSA). A disordered region spans residues 63 to 131 (ESAEKMAAKR…QARRDALNSA (69 aa)).

The protein belongs to the ATPase B chain family. F-type ATPases have 2 components, F(1) - the catalytic core - and F(0) - the membrane proton channel. F(1) has five subunits: alpha(3), beta(3), gamma(1), delta(1), epsilon(1). F(0) has three main subunits: a(1), b(2) and c(10-14). The alpha and beta chains form an alternating ring which encloses part of the gamma chain. F(1) is attached to F(0) by a central stalk formed by the gamma and epsilon chains, while a peripheral stalk is formed by the delta and b chains.

The protein resides in the cell membrane. In terms of biological role, f(1)F(0) ATP synthase produces ATP from ADP in the presence of a proton or sodium gradient. F-type ATPases consist of two structural domains, F(1) containing the extramembraneous catalytic core and F(0) containing the membrane proton channel, linked together by a central stalk and a peripheral stalk. During catalysis, ATP synthesis in the catalytic domain of F(1) is coupled via a rotary mechanism of the central stalk subunits to proton translocation. Functionally, component of the F(0) channel, it forms part of the peripheral stalk, linking F(1) to F(0). This is ATP synthase subunit b from Limosilactobacillus reuteri (strain DSM 20016) (Lactobacillus reuteri).